The sequence spans 464 residues: RYamide receptor (464 aa).

The Extracellular segment spans residues 1 to 105 (MEHHNSHLLP…EDMWSSAYFK (105 aa)). Asn-49, Asn-79, and Asn-85 each carry an N-linked (GlcNAc...) asparagine glycan. Residues 106-126 (IIVYMLYIPIFIFALIGNGTV) form a helical membrane-spanning segment. At 127–148 (CYIVYSTPRMRTVTNYFIASLA) the chain is on the cytoplasmic side. A helical membrane pass occupies residues 149 to 169 (IGDILMSFFCVPSSFISLFIL). The Extracellular portion of the chain corresponds to 170 to 189 (NYWPFGLALCHFVNYSQAVS). Asn-183 carries N-linked (GlcNAc...) asparagine glycosylation. A helical transmembrane segment spans residues 190-210 (VLVSAYTLVAISIDRYIAIMW). Residues 211–221 (PLKPRITKRYA) lie on the Cytoplasmic side of the membrane. A helical transmembrane segment spans residues 222-242 (TFIIAGVWFIALATALPIPIV). At 243–274 (SGLDIPMSPWHTKCEKYICREMWPSRTQEYYY) the chain is on the extracellular side. The chain crosses the membrane as a helical span at residues 275-295 (TLSLFALQFVVPLGVLIFTYA). The Cytoplasmic segment spans residues 296 to 329 (RITIRVWAKRPPGEAETNRDQRMARSKRKMVKMM). Residues 330–350 (LTVVIVFTCCWLPFNILQLLL) form a helical membrane-spanning segment. The Extracellular segment spans residues 351 to 363 (NDEEFAHWDPLPY). A helical transmembrane segment spans residues 364–384 (VWFAFHWLAMSHCCYNPIIYC). Topologically, residues 385-464 (YMNARFRSGF…LSCGETSPLR (80 aa)) are cytoplasmic.

It belongs to the G-protein coupled receptor 1 family.

It is found in the cell membrane. In terms of biological role, receptor for the neuropeptides RYamide-1 and RYamide-2. The activity of this receptor is mediated by G proteins which activate a phosphatidyl-inositol-calcium second messenger system. RYamide signaling may suppress feeding behavior. This is RYamide receptor from Drosophila melanogaster (Fruit fly).